The chain runs to 618 residues: Leucine aminopeptidase 2 (618 aa).

Residues 139-141 and 271-276 each bind a peptide; these read QCQ and PYGGME. His300 lines the Zn(2+) pocket. Residue Glu301 is the Proton acceptor of the active site. Zn(2+) is bound by residues His304 and Glu323. Catalysis depends on Tyr389, which acts as the Proton donor.

This sequence belongs to the peptidase M1 family. The cofactor is Zn(2+).

It is found in the cytoplasm. It localises to the nucleus. The catalysed reaction is an epoxide + H2O = an ethanediol. Aminopeptidase that preferentially cleaves di- and tripeptides. Also has low epoxide hydrolase activity (in vitro). Can hydrolyze the epoxide leukotriene LTA(4) but it forms preferentially 5,6-dihydroxy-7,9,11,14-eicosatetraenoic acid rather than the cytokine leukotriene B(4) as the product compared to the homologous mammalian enzyme (in vitro). The polypeptide is Leucine aminopeptidase 2 (Aspergillus clavatus (strain ATCC 1007 / CBS 513.65 / DSM 816 / NCTC 3887 / NRRL 1 / QM 1276 / 107)).